We begin with the raw amino-acid sequence, 732 residues long: Protein DIA2 (732 aa).

3 TPR repeats span residues 15-48 (VLKA…CDSY), 78-111 (IKIL…EPGN), and 113-145 (KCYI…CNND). The F-box domain maps to 204-251 (TDLVGNLPIEILPIIFQRFTTKELVTLSLVCNKWRDKILYHLDCFQEF). Position 393 is a phosphoserine (Ser393). 7 LRR repeats span residues 425–449 (LEKI…LLRG), 480–505 (FPDL…LLKF), 509–532 (WKNL…DEDQ), 550–574 (LQNL…LCEQ), 579–602 (GRKL…HAHT), 616–637 (LSKL…TMKS), and 645–669 (LENL…EFLK).

The protein belongs to the DIA2 family. As to quaternary structure, component of the SCF(DIA2) complex containing CDC53, SKP1, RBX1 and DIA2. Interacts with SKP1.

The protein resides in the nucleus. Functionally, F-box protein component of a SCF (SKP1-CUL1-F-box protein) E3 ubiquitin-protein ligase complex which mediates the ubiquitination and subsequent proteasomal degradation of target proteins. Probably recognizes and binds to phosphorylated target proteins. The SCF(DIA2) complex is specifically involved in the pheromone induced degradation of phosphorylated TEC1. The SCF(DIA2) complex binds to DNA replication origins. Involved in DNA replication, genome stability, and the control of cell cycle, probably through its association to replication origins to facilitate the ubiquitination of another origin-binding protein. Required for invasive growth and growth under alkaline conditions. This Saccharomyces cerevisiae (strain ATCC 204508 / S288c) (Baker's yeast) protein is Protein DIA2 (DIA2).